A 69-amino-acid chain; its full sequence is UPF0337 protein YjbJ (69 aa).

The protein belongs to the UPF0337 (CsbD) family.

This chain is UPF0337 protein YjbJ (yjbJ), found in Escherichia coli O157:H7.